The primary structure comprises 379 residues: Probable 3-phenylpropionic acid transporter (379 aa).

At 1–4 (MVLQ) the chain is on the cytoplasmic side. Residues 5 to 31 (STRWLALGYFTYFFSYGIFLPFWSVWL) form a helical membrane-spanning segment. Residues 32 to 37 (KGIGLT) lie on the Periplasmic side of the membrane. Residues 38–66 (PETIGLLLGAGLVARFLGSLLIAPRVSDP) form a helical membrane-spanning segment. Residues 67–70 (SRLI) lie on the Cytoplasmic side of the membrane. Residues 71–96 (SALRVLALLTLLFAVAFWAGAHVAWL) form a helical membrane-spanning segment. The Periplasmic segment spans residues 97–100 (MLVM). Residues 101 to 118 (IGFNLFFSPLVPLTDALA) form a helical membrane-spanning segment. The Cytoplasmic portion of the chain corresponds to 119 to 129 (NTWQKQFPLDY). The helical transmembrane segment at 130 to 152 (GKVRLWGSVAFVIGSALTGKLVT) threads the bilayer. Over 153–155 (MFD) the chain is Periplasmic. Residues 156 to 175 (YRVILALLTLGVASMLLGFL) form a helical membrane-spanning segment. Residues 176 to 207 (IRPTIQPQGASRQQESTGWSAWLALVRQNWRF) are Cytoplasmic-facing. A helical membrane pass occupies residues 208–227 (LACVCLLQGAHAAYYGFSAI). Over 228 to 231 (YWQA) the chain is Periplasmic. Residues 232–256 (AGYSASAVGYLWSLGVVAEVIIFAL) form a helical membrane-spanning segment. Topologically, residues 257-266 (SNKLFRRCSA) are cytoplasmic. The helical transmembrane segment at 267–286 (RDMLLISAICGVVRWGIMGA) threads the bilayer. Residues 287–289 (TTA) are Periplasmic-facing. The helical transmembrane segment at 290-312 (LPWLIVVQILHCGTFTVCHLAAM) threads the bilayer. Over 313–323 (RYIAARQGSEV) the chain is Cytoplasmic. A helical membrane pass occupies residues 324–351 (IRLQAVYSAVAMGGSIAIMTVFAGFLYQ). At 352 to 354 (YLG) the chain is on the periplasmic side. The helical transmembrane segment at 355 to 375 (HGVFWVMALVALPAMFLRPKV) threads the bilayer. Topologically, residues 376–379 (VPSC) are cytoplasmic.

This sequence belongs to the major facilitator superfamily. Phenyl propionate permease (PPP) (TC 2.A.1.27) family.

Its subcellular location is the cell inner membrane. Functionally, probable permease involved in the uptake of 3-phenylpropionic acid. This chain is Probable 3-phenylpropionic acid transporter (hcaT), found in Escherichia coli (strain K12).